Reading from the N-terminus, the 338-residue chain is Lipoate-protein ligase A (338 aa).

In terms of domain architecture, BPL/LPL catalytic spans 29-216 (DPNQRVLFLW…AFFAHYGARV (188 aa)). ATP contacts are provided by residues arginine 71, 76–79 (GAVF), and lysine 134. (R)-lipoate is bound at residue lysine 134.

The protein belongs to the LplA family. In terms of assembly, monomer.

The protein localises to the cytoplasm. The catalysed reaction is L-lysyl-[lipoyl-carrier protein] + (R)-lipoate + ATP = N(6)-[(R)-lipoyl]-L-lysyl-[lipoyl-carrier protein] + AMP + diphosphate + H(+). The protein operates within protein modification; protein lipoylation via exogenous pathway; protein N(6)-(lipoyl)lysine from lipoate: step 1/2. Its pathway is protein modification; protein lipoylation via exogenous pathway; protein N(6)-(lipoyl)lysine from lipoate: step 2/2. Catalyzes both the ATP-dependent activation of exogenously supplied lipoate to lipoyl-AMP and the transfer of the activated lipoyl onto the lipoyl domains of lipoate-dependent enzymes. This Aeromonas salmonicida (strain A449) protein is Lipoate-protein ligase A.